The sequence spans 408 residues: Aminomethyltransferase, mitochondrial (408 aa).

The transit peptide at 1–30 (MRGGGLWQLGQSVTRRLAQAEKKVIARRCF) directs the protein to the mitochondrion. Glu-235, Arg-266, and Tyr-404 together coordinate substrate.

It belongs to the GcvT family. The glycine cleavage system is composed of four proteins: P, T, L and H.

It is found in the mitochondrion. It catalyses the reaction N(6)-[(R)-S(8)-aminomethyldihydrolipoyl]-L-lysyl-[protein] + (6S)-5,6,7,8-tetrahydrofolate = N(6)-[(R)-dihydrolipoyl]-L-lysyl-[protein] + (6R)-5,10-methylene-5,6,7,8-tetrahydrofolate + NH4(+). Its function is as follows. The glycine cleavage system catalyzes the degradation of glycine. This is Aminomethyltransferase, mitochondrial (GDCST) from Mesembryanthemum crystallinum (Common ice plant).